We begin with the raw amino-acid sequence, 594 residues long: Probable pectinesterase/pectinesterase inhibitor 33 (594 aa).

An N-terminal signal peptide occupies residues 1-22; the sequence is MLRGIFHICLLASFLLLPFSSA. Residues 28–75 are disordered; sequence FTGGTDAPPPWDHNVSPPPETAPSPTPTSSPSTTSPPSPGPVAAPSPI. Pro residues predominate over residues 34–71; it reads APPPWDHNVSPPPETAPSPTPTSSPSTTSPPSPGPVAA. N-linked (GlcNAc...) asparagine glycosylation is found at Asn-77, Asn-170, Asn-213, and Asn-226. Residues 78–237 form a pectinesterase inhibitor 33 region; sequence GSVSGDMTWW…SDLIGNCLAV (160 aa). Residues 280–581 are pectinesterase 33; it reads HLVVAQDRSG…TVGSLIAGGS (302 aa). Residues Thr-356 and Gln-386 each coordinate substrate. Residue Asp-409 is the Proton donor; for pectinesterase activity of the active site. A disulfide bridge connects residues Cys-423 and Cys-443. Asp-430 acts as the Nucleophile; for pectinesterase activity in catalysis. Positions 498 and 500 each coordinate substrate.

The protein in the N-terminal section; belongs to the PMEI family. This sequence in the C-terminal section; belongs to the pectinesterase family. In terms of tissue distribution, expressed in siliques.

It localises to the secreted. The protein resides in the cell wall. It catalyses the reaction [(1-&gt;4)-alpha-D-galacturonosyl methyl ester](n) + n H2O = [(1-&gt;4)-alpha-D-galacturonosyl](n) + n methanol + n H(+). The protein operates within glycan metabolism; pectin degradation; 2-dehydro-3-deoxy-D-gluconate from pectin: step 1/5. Acts in the modification of cell walls via demethylesterification of cell wall pectin. This chain is Probable pectinesterase/pectinesterase inhibitor 33 (PME33), found in Arabidopsis thaliana (Mouse-ear cress).